The sequence spans 433 residues: ATP-dependent RNA helicase SUB2 (433 aa).

A Q motif motif is present at residues 49-77; that stretch reads TGFRDFLLKPELLRAIGDCGFEHPSEVQQ. The Helicase ATP-binding domain maps to 80–255; the sequence is IPQSILGTDV…KKFMQNPLEI (176 aa). 93 to 100 is an ATP binding site; the sequence is AKSGLGKT. The DEAD box signature appears at 202–205; it reads DECD. Residues 267 to 428 form the Helicase C-terminal domain; that stretch reads GLQQYYIKLE…EFPEEGVDPS (162 aa).

It belongs to the DEAD box helicase family. DECD subfamily.

Its subcellular location is the nucleus. The enzyme catalyses ATP + H2O = ADP + phosphate + H(+). Its function is as follows. ATP-binding RNA helicase involved in transcription elongation and required for the export of mRNA out of the nucleus. SUB2 also plays a role in pre-mRNA splicing and spliceosome assembly. May be involved in rDNA and telomeric silencing, and maintenance of genome integrity. This Scheffersomyces stipitis (strain ATCC 58785 / CBS 6054 / NBRC 10063 / NRRL Y-11545) (Yeast) protein is ATP-dependent RNA helicase SUB2 (SUB2).